The sequence spans 126 residues: Large ribosomal subunit protein bL20 (126 aa).

This sequence belongs to the bacterial ribosomal protein bL20 family.

Functionally, binds directly to 23S ribosomal RNA and is necessary for the in vitro assembly process of the 50S ribosomal subunit. It is not involved in the protein synthesizing functions of that subunit. The sequence is that of Large ribosomal subunit protein bL20 from Acholeplasma laidlawii (strain PG-8A).